The chain runs to 1149 residues: Beta-alanine-activating enzyme (1149 aa).

ATP-binding positions include 178-186 (TSGTTGLPK), Asp-408, Arg-422, and Lys-543. Residues 570–646 (ASVRLKLQNL…DLLSHIMTET (77 aa)) form the Carrier domain. O-(pantetheine 4'-phosphoryl)serine is present on Ser-605. A disordered region spans residues 653-683 (PSKKRTADYSDSEASGKRQHKEMTTSSDTES).

Belongs to the ATP-dependent AMP-binding enzyme family.

Its function is as follows. Covalently binds beta-alanine in an ATP-dependent manner to form a thioester bond with its phosphopantetheine group and transfers it to an, as yet, unknown acceptor. May be required for a post-translational protein modification or for post-transcriptional modification of an RNA. The protein is Beta-alanine-activating enzyme (aasdh) of Danio rerio (Zebrafish).